The following is a 205-amino-acid chain: Thymidylate kinase (205 aa).

G13–S20 is an ATP binding site.

The protein belongs to the thymidylate kinase family.

The enzyme catalyses dTMP + ATP = dTDP + ADP. Its function is as follows. Phosphorylation of dTMP to form dTDP in both de novo and salvage pathways of dTTP synthesis. The polypeptide is Thymidylate kinase (Leptospira borgpetersenii serovar Hardjo-bovis (strain L550)).